Reading from the N-terminus, the 471-residue chain is UDP-N-acetylmuramate--L-alanine ligase (471 aa).

G114 to T120 is a binding site for ATP.

Belongs to the MurCDEF family.

Its subcellular location is the cytoplasm. The catalysed reaction is UDP-N-acetyl-alpha-D-muramate + L-alanine + ATP = UDP-N-acetyl-alpha-D-muramoyl-L-alanine + ADP + phosphate + H(+). It participates in cell wall biogenesis; peptidoglycan biosynthesis. In terms of biological role, cell wall formation. The polypeptide is UDP-N-acetylmuramate--L-alanine ligase (Rhizobium etli (strain ATCC 51251 / DSM 11541 / JCM 21823 / NBRC 15573 / CFN 42)).